We begin with the raw amino-acid sequence, 210 residues long: Cytochrome c biogenesis ATP-binding export protein CcmA (210 aa).

The ABC transporter domain maps to 3–205 (LHLQAAGLAC…KPSGYRELNL (203 aa)). 37 to 44 (GPNGSGKT) contacts ATP.

It belongs to the ABC transporter superfamily. CcmA exporter (TC 3.A.1.107) family. As to quaternary structure, the complex is composed of two ATP-binding proteins (CcmA) and two transmembrane proteins (CcmB).

It is found in the cell inner membrane. It catalyses the reaction heme b(in) + ATP + H2O = heme b(out) + ADP + phosphate + H(+). Functionally, part of the ABC transporter complex CcmAB involved in the biogenesis of c-type cytochromes; once thought to export heme, this seems not to be the case, but its exact role is uncertain. Responsible for energy coupling to the transport system. In Pseudomonas putida (strain ATCC 47054 / DSM 6125 / CFBP 8728 / NCIMB 11950 / KT2440), this protein is Cytochrome c biogenesis ATP-binding export protein CcmA.